The primary structure comprises 353 residues: Nicotinate-nucleotide--dimethylbenzimidazole phosphoribosyltransferase (353 aa).

Glutamate 318 functions as the Proton acceptor in the catalytic mechanism.

Belongs to the CobT family.

The catalysed reaction is 5,6-dimethylbenzimidazole + nicotinate beta-D-ribonucleotide = alpha-ribazole 5'-phosphate + nicotinate + H(+). The protein operates within nucleoside biosynthesis; alpha-ribazole biosynthesis; alpha-ribazole from 5,6-dimethylbenzimidazole: step 1/2. Catalyzes the synthesis of alpha-ribazole-5'-phosphate from nicotinate mononucleotide (NAMN) and 5,6-dimethylbenzimidazole (DMB). The chain is Nicotinate-nucleotide--dimethylbenzimidazole phosphoribosyltransferase from Roseiflexus castenholzii (strain DSM 13941 / HLO8).